The sequence spans 1037 residues: Presequence protease, mitochondrial (1037 aa).

The N-terminal 28 residues, M1–W28, are a transit peptide targeting the mitochondrion. H104 is a binding site for Zn(2+). Residue E107 is the Proton acceptor of the active site. H108 is a binding site for Zn(2+). Cysteines 119 and 556 form a disulfide. The active site involves E180. E205 is a Zn(2+) binding site. K759 carries the post-translational modification N6-acetyllysine. At K770 the chain carries N6-acetyllysine; alternate. Residue K770 is modified to N6-succinyllysine; alternate. The span at G804–R814 shows a compositional bias: basic residues. The interval G804 to H834 is disordered. K849 carries the post-translational modification N6-succinyllysine. K884 is modified (N6-acetyllysine). At K946 the chain carries N6-succinyllysine.

The protein belongs to the peptidase M16 family. PreP subfamily. In terms of assembly, monomer and homodimer; homodimerization is induced by binding of the substrate. Zn(2+) serves as cofactor. A disulfide bond locks the enzyme in the closed conformation preventing substrate entry into the catalytic chamber. Widely expressed. Expressed at higher level in muscle and heart compared to brain, pancreas, liver, lung and placenta.

The protein localises to the mitochondrion. It is found in the mitochondrion matrix. Mainly exists in a closed and catalytically competent conformation but a closed-to-open switch allows substrate entry into the catalytic chamber. Substrate binding induces closure and dimerization. A disulfide bond may lock the enzyme in a closed conformation preventing substrate entry into the catalytic chamber, participating in redox regulation of the enzyme. Inhibited by metal-chelating agents. Inhibited by nickel and zinc excess, and slightly activated by manganese. Metalloendopeptidase of the mitochondrial matrix that functions in peptide cleavage and degradation rather than in protein processing. Has an ATP-independent activity. Specifically cleaves peptides in the range of 5 to 65 residues. Shows a preference for cleavage after small polar residues and before basic residues, but without any positional preference. Degrades the transit peptides of mitochondrial proteins after their cleavage. Also degrades other unstructured peptides. It is also able to degrade amyloid-beta protein 40, one of the peptides produced by APP processing, when it accumulates in mitochondrion. It is a highly efficient protease, at least toward amyloid-beta protein 40. Cleaves that peptide at a specific position and is probably not processive, releasing digested peptides intermediates that can be further cleaved subsequently. It is also able to degrade amyloid-beta protein 42. The chain is Presequence protease, mitochondrial from Homo sapiens (Human).